A 474-amino-acid polypeptide reads, in one-letter code: PRAME family member 7 (474 aa).

Residues 97–122 (QSKLQVLDLRNVDENFCDIFSGATAS) form an LRR 1; degenerate repeat. An LRR 2; degenerate repeat occupies 177–201 (HVCCKELQVFGMPIHSIIEVLNMVE). One copy of the LRR 3; degenerate repeat lies at 202–228 (LDCIQEVEVCCPWELSTLVKFAPYLGQ). The stretch at 229-264 (MRNLRKLVLFNIRASACIPPDNKGQFIARFTSQFLK) is one LRR 4; degenerate repeat. LRR repeat units lie at residues 265-290 (LDYF…LRCL), 291-322 (QASL…RQLK), 323-341 (ELDL…PLTG), 347-374 (VATL…VLSR), and 375-399 (CSQL…LLRH).

It belongs to the PRAME family.

The protein is PRAME family member 7 of Homo sapiens (Human).